The primary structure comprises 581 residues: 2-succinyl-5-enolpyruvyl-6-hydroxy-3-cyclohexene-1-carboxylate synthase (581 aa).

The protein belongs to the TPP enzyme family. MenD subfamily. As to quaternary structure, homodimer. Mg(2+) serves as cofactor. Mn(2+) is required as a cofactor. It depends on thiamine diphosphate as a cofactor.

The catalysed reaction is isochorismate + 2-oxoglutarate + H(+) = 5-enolpyruvoyl-6-hydroxy-2-succinyl-cyclohex-3-ene-1-carboxylate + CO2. The protein operates within quinol/quinone metabolism; 1,4-dihydroxy-2-naphthoate biosynthesis; 1,4-dihydroxy-2-naphthoate from chorismate: step 2/7. It functions in the pathway quinol/quinone metabolism; menaquinone biosynthesis. Its function is as follows. Catalyzes the thiamine diphosphate-dependent decarboxylation of 2-oxoglutarate and the subsequent addition of the resulting succinic semialdehyde-thiamine pyrophosphate anion to isochorismate to yield 2-succinyl-5-enolpyruvyl-6-hydroxy-3-cyclohexene-1-carboxylate (SEPHCHC). The sequence is that of 2-succinyl-5-enolpyruvyl-6-hydroxy-3-cyclohexene-1-carboxylate synthase from Chlorobium phaeobacteroides (strain BS1).